A 1033-amino-acid chain; its full sequence is Tyrosine-protein kinase-like otk (1033 aa).

Residues 1–22 (MTARMISICGLVMALMMASVLA) form the signal peptide. Topologically, residues 23–581 (SSSRFQRVPQ…GGDGFLVTRA (559 aa)) are extracellular. Ig-like C2-type domains lie at 25–114 (SRFQ…AKLS), 113–199 (LSVI…RVMS), 251–365 (PEDL…APIN), 368–463 (PGIL…VAIN), and 468–558 (PKFS…VQLV). N-linked (GlcNAc...) asparagine glycosylation occurs at Asn39. 4 cysteine pairs are disulfide-bonded: Cys46–Cys95, Cys137–Cys188, Cys276–Cys354, and Cys399–Cys447. N-linked (GlcNAc...) asparagine glycosylation is found at Asn336, Asn417, Asn429, Asn444, Asn457, Asn512, and Asn524. The cysteines at positions 490 and 542 are disulfide-linked. A helical transmembrane segment spans residues 582–602 (VLITMTVALAYIVLVVGLMLW). The Cytoplasmic portion of the chain corresponds to 603–1033 (CRYRRQARKA…LSKAMQSAEK (431 aa)). 2 disordered regions span residues 617–679 (LSTK…KKSA) and 718–760 (SPSD…KTSM). Residues 655–673 (KSSGDAQKSDDTACSQQSR) show a composition bias toward polar residues. A Phosphoserine modification is found at Ser678. The Protein kinase; inactive domain maps to 692–1028 (LSELIQIGRG…QLGAALSKAM (337 aa)). A compositionally biased stretch (basic and acidic residues) spans 720–731 (SDKDADTEKQHS).

Belongs to the protein kinase superfamily. Tyr protein kinase family. Insulin receptor subfamily. As to quaternary structure, interacts with plexA; component of a receptor complex that mediates the repulsive signaling in response to Semaphorin ligands. As to expression, dynamically expressed during embryogenesis in several areas of the developing nervous system, including neurons and fasciculating axons. Expression in stage 7 embryos is seen in the anterior midgut primordia, cephalic furrow and along the germinal band. At stage 11, expression is in 15 stripes over the trunk region, and in the anterior and posterior midgut primordia. Stage 12 shows expression in the developing nervous system, procephalic lobe and maxillar bud. Stage 13 shows expression in the ventral cord, maxillar segment and in three regions of the gut. At stage 16 expression is preferentially detected throughout the nervous system, including the neuromers in the ventral cord and the supraesophageal ganglion (at protein level). In larva, expression is seen in developing R cells and is localized predominantly to R1-R6 growth cones.

It localises to the cell membrane. Its function is as follows. Acts as a calcium-dependent, homophilic cell adhesion molecule that regulates neural recognition during the development of the nervous system. Component of the repulsive Plexin signaling response to regulate motor axon guidance at the embryonic stage. Also component of a receptor complex that is required in the adult visual system to innervate the lamina layer; specific targeting of R1-R6 axons. The chain is Tyrosine-protein kinase-like otk from Drosophila melanogaster (Fruit fly).